Consider the following 256-residue polypeptide: Undecaprenyl-diphosphatase 2 (256 aa).

8 consecutive transmembrane segments (helical) span residues 1–21, 38–58, 70–90, 97–117, 134–154, 175–195, 208–228, and 236–256; these read MDIF…FLPI, ATAT…LAVL, LNLW…AFIF, LFNV…FLLL, VTYK…IPGT, AEFS…YDLL, ALAV…KLFI, and FVSF…IAYV.

It belongs to the UppP family.

The protein localises to the cell inner membrane. It catalyses the reaction di-trans,octa-cis-undecaprenyl diphosphate + H2O = di-trans,octa-cis-undecaprenyl phosphate + phosphate + H(+). Functionally, catalyzes the dephosphorylation of undecaprenyl diphosphate (UPP). Confers resistance to bacitracin. The protein is Undecaprenyl-diphosphatase 2 of Pseudoalteromonas translucida (strain TAC 125).